The primary structure comprises 1676 residues: Protein TIC 214 (1676 aa).

The next 6 membrane-spanning stretches (helical) occupy residues 24-44 (KIINSVILAGLYYGFLTALAL), 70-90 (LILGQLGQFLSIYYAPLYIAF), 93-113 (PYTLTVLTLIYFLVNLFGNNL), 130-150 (LEILCIFLNNLILQLLNTCIF), 170-190 (MVFLISSFSAWLIGQILVLMC), and 218-238 (FFLVVNCLFGSSLFILTIQSL). Basic and acidic residues-rich tracts occupy residues 264–276 (LKKSGVAKEGKST) and 283–298 (SHEKDSFKKEPYSKLE). 4 disordered regions span residues 264 to 302 (LKKSGVAKEGKSTEDEEDLSHEKDSFKKEPYSKLENEDE), 546 to 610 (LVVF…SYSI), 1123 to 1151 (NKQSLQKGNSKGNSNLDDSKNRNKNNLIL), and 1372 to 1436 (QQQN…SEDD). A compositionally biased stretch (polar residues) spans 562 to 586 (DSGNIQNKSSDKTINPQNNLTNSKT). Over residues 597–610 (TTEKEPKDDKSYSI) the composition is skewed to basic and acidic residues. Residues 1123-1138 (NKQSLQKGNSKGNSNL) are compositionally biased toward polar residues. Low complexity predominate over residues 1372–1390 (QQQNQTTTKINTETKNQQK). Residues 1384–1436 (ETKNQQKNRVENEENKETENQQNAETKNKQKSKTENEENKETENQQNDESEDD) are a coiled coil. 2 stretches are compositionally biased toward basic and acidic residues: residues 1391–1402 (NRVENEENKETE) and 1409–1426 (TKNKQKSKTENEENKETE).

This sequence belongs to the TIC214 family. As to quaternary structure, part of the Tic complex.

It is found in the plastid. The protein localises to the chloroplast inner membrane. In terms of biological role, involved in protein precursor import into chloroplasts. May be part of an intermediate translocation complex acting as a protein-conducting channel at the inner envelope. This Cuscuta obtusiflora (Peruvian dodder) protein is Protein TIC 214.